The sequence spans 291 residues: Shikimate dehydrogenase (NADP(+)) (291 aa).

Shikimate-binding positions include 14-16 and Thr-61; that span reads SKS. Catalysis depends on Lys-65, which acts as the Proton acceptor. Position 77 (Glu-77) interacts with NADP(+). Shikimate contacts are provided by Asn-86 and Asp-102. NADP(+)-binding positions include 139-143, 164-169, and Leu-232; these read GAGGA and NRTFSR. Position 234 (Tyr-234) interacts with shikimate. Gly-256 provides a ligand contact to NADP(+).

The protein belongs to the shikimate dehydrogenase family. In terms of assembly, homodimer.

The enzyme catalyses shikimate + NADP(+) = 3-dehydroshikimate + NADPH + H(+). The protein operates within metabolic intermediate biosynthesis; chorismate biosynthesis; chorismate from D-erythrose 4-phosphate and phosphoenolpyruvate: step 4/7. Involved in the biosynthesis of the chorismate, which leads to the biosynthesis of aromatic amino acids. Catalyzes the reversible NADPH linked reduction of 3-dehydroshikimate (DHSA) to yield shikimate (SA). This Blochmanniella pennsylvanica (strain BPEN) protein is Shikimate dehydrogenase (NADP(+)).